The sequence spans 482 residues: Dihydrolipoyllysine-residue acetyltransferase component of pyruvate dehydrogenase complex, mitochondrial (482 aa).

The N-terminal 28 residues, 1–28 (MSAFVRVVPRISRSSVLTRSLRLQLRCY), are a transit peptide targeting the mitochondrion. The Lipoyl-binding domain maps to 34–110 (HTIIGMPALS…PVNKPIAVYV (77 aa)). Residue K75 is modified to N6-lipoyllysine. The segment at 122-170 (FKLEDSGSDSKTSTKAQPAEPQAEKKQEAPAEETKTSAPEAKKSDVAAP) is disordered. The span at 143 to 166 (QAEKKQEAPAEETKTSAPEAKKSD) shows a compositional bias: basic and acidic residues. Residues 175 to 212 (FASPLAKTIALEKGISLKDVHGTGPRGRITKADIESYL) enclose the Peripheral subunit-binding (PSBD) domain. A disordered region spans residues 214 to 251 (KSSKQSSQTSGAAAATPAAATSSTTAGSAPSPSSTASY). The span at 217–250 (KQSSQTSGAAAATPAAATSSTTAGSAPSPSSTAS) shows a compositional bias: low complexity. Catalysis depends on residues H455 and D459.

It belongs to the 2-oxoacid dehydrogenase family. Eukaryotic pyruvate dehydrogenase (PDH) complexes are organized as a core consisting of the oligomeric dihydrolipoamide acetyl-transferase (E2), around which are arranged multiple copies of pyruvate dehydrogenase (E1), dihydrolipoamide dehydrogenase (E3) and protein X (E3BP) bound by non-covalent bonds. (R)-lipoate is required as a cofactor.

The protein resides in the mitochondrion matrix. It carries out the reaction N(6)-[(R)-dihydrolipoyl]-L-lysyl-[protein] + acetyl-CoA = N(6)-[(R)-S(8)-acetyldihydrolipoyl]-L-lysyl-[protein] + CoA. In terms of biological role, the pyruvate dehydrogenase complex catalyzes the overall conversion of pyruvate to acetyl-CoA and CO(2). This is Dihydrolipoyllysine-residue acetyltransferase component of pyruvate dehydrogenase complex, mitochondrial (LAT1) from Saccharomyces cerevisiae (strain ATCC 204508 / S288c) (Baker's yeast).